Consider the following 393-residue polypeptide: MIMVAREKDLMMVSMGPHHPSMHGVLRLIVTLDGEDVIDCEPVLGYLHRGMEKIAENRTIVQYLPYVTRWDYLATMFTEAITVNAPEKLENIQIPKRASYIRMIMLELSRIASHLLWLGPFMADIGAQTPFFYILREREMIYDLFEAATGMRMMHNYFRIGGVAVDLPYGWIDKCLDFCYYFFPKVTEYERLITRNPIFLKRVEGVGIISREEAIDWSLSGPMLRASGIQWDLRKVDHYECYDELDWEIQWQKEGDSLARYLLRIGEMKESIKIIRQALEVIPGGPYENLEVRRLNKGKDSQWNDFESRFISKKPSPTFELSKQEHYVRVEAPKGELGIFFIGDDNIFPWRWKIRPPGFINLQIPPQLVKRMKLADIMTILGSIDIIMGEVDR.

This sequence belongs to the complex I 49 kDa subunit family. NDH is composed of at least 16 different subunits, 5 of which are encoded in the nucleus.

Its subcellular location is the plastid. It is found in the chloroplast thylakoid membrane. The enzyme catalyses a plastoquinone + NADH + (n+1) H(+)(in) = a plastoquinol + NAD(+) + n H(+)(out). The catalysed reaction is a plastoquinone + NADPH + (n+1) H(+)(in) = a plastoquinol + NADP(+) + n H(+)(out). Functionally, NDH shuttles electrons from NAD(P)H:plastoquinone, via FMN and iron-sulfur (Fe-S) centers, to quinones in the photosynthetic chain and possibly in a chloroplast respiratory chain. The immediate electron acceptor for the enzyme in this species is believed to be plastoquinone. Couples the redox reaction to proton translocation, and thus conserves the redox energy in a proton gradient. The protein is NAD(P)H-quinone oxidoreductase subunit H, chloroplastic of Cryptomeria japonica (Japanese cedar).